A 305-amino-acid chain; its full sequence is Superkiller complex protein 8 (305 aa).

Met1 carries the post-translational modification N-acetylmethionine. Position 2 is an N-acetylthreonine; in WD repeat-containing protein 61, N-terminally processed (Thr2). WD repeat units follow at residues 14-57, 62-101, 104-143, 146-187, 188-227, 230-269, and 272-305; these read AHDD…LELQ, GHQLGVVSVDISHTLPIAASSSLDAHIRLWDLENGKQMKS, AGPVDAWTLAFSPDSQYLATGTHMGKVNIFGVESGKKEYS, TRGK…HTLE, GHAMPIRSLTFSPDSQLLVTASDDGYIKIYDVQHANLAGT, GHASWVLNVAFCPDDTHFVSSSSDKSVKVWDVGTRTCIHT, and DHQDQVWGVKYNGNGSKIVSVGDDQEIHVYDCPI.

It belongs to the SKI8 family. As to quaternary structure, component of the PAF1 complex, which consists of CDC73, PAF1, LEO1, CTR9, RTF1 and SKIC8. The PAF1 complex interacts with PHF5A. Within the PAF1 complex interacts directly with PHF5A. Component of the SKI complex which consists of SKIC2, SKIC3 and SKIC8.

It localises to the nucleus. The protein resides in the cytoplasm. Component of the PAF1 complex (PAF1C) which has multiple functions during transcription by RNA polymerase II and is implicated in regulation of development and maintenance of embryonic stem cell pluripotency. PAF1C associates with RNA polymerase II through interaction with POLR2A CTD non-phosphorylated and 'Ser-2'- and 'Ser-5'-phosphorylated forms and is involved in transcriptional elongation, acting both independently and synergistically with TCEA1 and in cooperation with the DSIF complex and HTATSF1. PAF1C is required for transcription of Hox and Wnt target genes. PAF1C is involved in hematopoiesis and stimulates transcriptional activity of KMT2A/MLL1; it promotes leukemogenesis through association with KMT2A/MLL1-rearranged oncoproteins, such as KMT2A/MLL1-MLLT3/AF9 and KMT2A/MLL1-MLLT1/ENL. PAF1C is involved in histone modifications such as ubiquitination of histone H2B and methylation on histone H3 'Lys-4' (H3K4me3). PAF1C recruits the RNF20/40 E3 ubiquitin-protein ligase complex and the E2 enzyme UBE2A or UBE2B to chromatin which mediate monoubiquitination of 'Lys-120' of histone H2B (H2BK120ub1); UB2A/B-mediated H2B ubiquitination is proposed to be coupled to transcription. PAF1C is involved in mRNA 3' end formation probably through association with cleavage and poly(A) factors. In case of infection by influenza A strain H3N2, PAF1C associates with viral NS1 protein, thereby regulating gene transcription. Required for mono- and trimethylation on histone H3 'Lys-4' (H3K4me3), dimethylation on histone H3 'Lys-79' (H3K4me3). Required for Hox gene transcription. Also acts as a component of the SKI complex, a multiprotein complex that assists the RNA-degrading exosome during the mRNA decay and quality-control pathways. The SKI complex catalyzes mRNA extraction from 80S ribosomal complexes in the 3'-5' direction and channels mRNA to the cytosolic exosome for degradation. SKI-mediated extraction of mRNA from stalled ribosomes allow binding of the Pelota-HBS1L complex and subsequent ribosome disassembly by ABCE1 for ribosome recycling. In Mus musculus (Mouse), this protein is Superkiller complex protein 8 (Skic8).